A 451-amino-acid chain; its full sequence is Glycylpeptide N-tetradecanoyltransferase (451 aa).

Tetradecanoyl-CoA is bound by residues 177–179 (LCI) and 185–189 (NKRLA). The active-site Proton acceptor; via carboxylate is the L451.

Belongs to the NMT family. As to quaternary structure, monomer.

Its subcellular location is the cytoplasm. It catalyses the reaction N-terminal glycyl-[protein] + tetradecanoyl-CoA = N-tetradecanoylglycyl-[protein] + CoA + H(+). Its activity is regulated as follows. Competitively inhibited by SC-58272, a peptidomimetic derived from the N-terminal sequence of a natural substrate. Functionally, adds a myristoyl group to the N-terminal glycine residue of certain cellular proteins. Substrate specificity requires an N-terminal glycine in the nascent polypeptide substrates. Ser is present at position 5 in almost all known N-myristoyl proteins and Lys is commonly encountered at postion 6. Basic residues are preferred at positions 7 and 8. This chain is Glycylpeptide N-tetradecanoyltransferase (NMT1), found in Candida albicans (strain SC5314 / ATCC MYA-2876) (Yeast).